A 436-amino-acid chain; its full sequence is Protein FAM83A (436 aa).

Positions 1 to 298 (MSRSRHVGKI…LYASSKPLMG (298 aa)) are DUF1669. Positions 73 to 95 (AQAKEPPDAPDSAGGAESGPRGL) are disordered. S301, S329, S350, and S359 each carry phosphoserine. A disordered region spans residues 302–371 (PRLVAPFQPN…APIPPTVPRL (70 aa)). Residues 321-349 (LSGTSDSASDRTSSNPFSSLSTGSNAHNQ) are compositionally biased toward polar residues. Low complexity predominate over residues 350–359 (SLSTSSGPSS).

Belongs to the FAM83 family. Directly interacts (via DUF1669) with casein kinase isoforms CSNK1A1, CSNK1A1L, CSNK1D and CSNK1E. Post-translationally, may be phosphorylated upon EGFR activation. As to expression, widely expressed, with relatively higher expression levels in adipose tissues, especially in epididymal and inguinal white adipose tissue (at protein level).

It localises to the cytoplasm. It is found in the mitochondrion. Functionally, involved in mitochondrial maintenance during adipogenesis. May be acting by playing a role in the maintenance of normal mitochondrial function. This chain is Protein FAM83A, found in Mus musculus (Mouse).